The primary structure comprises 181 residues: MEGQRTQRRGYLKDKATVSNLVEEEMENGMDGEEEDGGDEDKRKKVMERVRGPSTDRVPSRLCQVDRCTVNLTEAKQYYRRHRVCEVHAKASAATVAGVRQRFCQQCSRFHELPEFDEAKRSCRRRLAGHNERRRKISGDSFGEGSGRRGFSGQLIQTQERNRVDRKLPMTNSSFKRPQIR.

Residues Met1 to Gly10 show a composition bias toward basic residues. Residues Met1–Val58 are disordered. Residues Val22–Asp39 are compositionally biased toward acidic residues. Positions Glu40 to Arg51 are enriched in basic and acidic residues. Residues Ser60 to Ile137 form an SBP-type zinc finger. Zn(2+) is bound by residues Cys63, Cys68, Cys85, His88, Cys104, Cys107, His111, and Cys123. The short motif at Lys120–Lys136 is the Bipartite nuclear localization signal element. The interval Ala128–Arg181 is disordered. A compositionally biased stretch (polar residues) spans Met170 to Arg181.

The cofactor is Zn(2+). In terms of tissue distribution, expressed in the inflorescence apical meristem and young flowers.

The protein localises to the nucleus. The protein resides in the cytoplasm. Functionally, trans-acting factor that binds specifically to the consensus nucleotide sequence 5'-TNCGTACAA-3' of AP1 promoter. Promotes both vegetative phase change and flowering. This chain is Squamosa promoter-binding-like protein 5 (SPL5), found in Arabidopsis thaliana (Mouse-ear cress).